Here is a 753-residue protein sequence, read N- to C-terminus: Serine/threonine-protein phosphatase with EF-hands 2 (753 aa).

The IQ domain occupies 21–46; that stretch reads KAAALIQRWYRRYVARLEMRRRCTWS. Positions 128–540 are catalytic; it reads ATALVEAFRL…PHIVQYQANK (413 aa). Mn(2+)-binding residues include D179, H181, D208, and N240. The active-site Proton donor is the H241. H292 contacts Mn(2+). 2 disordered regions span residues 318-382 and 409-435; these read CKTR…GSLD and VTGE…KPTQ. The span at 322–333 shows a compositional bias: basic and acidic residues; that stretch reads QKSEKQMEEKRR. The segment covering 348-361 has biased composition (low complexity); it reads LPESRSLPSSPLRL. Polar residues predominate over residues 366 to 377; the sequence is AQKTSRSSSIPC. Mn(2+) is bound at residue H488. EF-hand domains are found at residues 568-603, 652-687, and 692-727; these read AHSS…VLHL, RNRS…FSSH, and ITDD…VEKS. Ca(2+) is bound by residues D665, D667, S669, E676, D705, N707, D709, H711, and E716. Positions 732–753 are disordered; sequence DASECPQATNAKDSGCSSPGAH. The span at 737–753 shows a compositional bias: polar residues; it reads PQATNAKDSGCSSPGAH.

The protein belongs to the PPP phosphatase family. Mn(2+) serves as cofactor. Retinal specific.

The protein localises to the cytoplasm. It is found in the cell projection. Its subcellular location is the cilium. The protein resides in the photoreceptor outer segment. It localises to the photoreceptor inner segment. The enzyme catalyses O-phospho-L-seryl-[protein] + H2O = L-seryl-[protein] + phosphate. The catalysed reaction is O-phospho-L-threonyl-[protein] + H2O = L-threonyl-[protein] + phosphate. Activated by calcium. In terms of biological role, may play a role in phototransduction. May dephosphorylate photoactivated rhodopsin. May function as a calcium sensing regulator of ionic currents, energy production or synaptic transmission. The sequence is that of Serine/threonine-protein phosphatase with EF-hands 2 (PPEF2) from Homo sapiens (Human).